Consider the following 148-residue polypeptide: WGDSSSSASACWSCFSLVSGIGADQECPPGWSSHEGHCYKVFSEYKTWVDAEQYCTEQENGGHLVSFHNREEVDFVVKLGYTILKADIVWIGLRDFWRECHWEWSNGAQLDYKGWSDEPNCFIVYTVGNKWLHRKCSSTQQFVCKSPA.

An N-terminal signal peptide occupies residues 1–23 (WGDSSSSASACWSCFSLVSGIGA). Cystine bridges form between C27–C38, C55–C144, and C121–C136. The C-type lectin domain maps to 34–145 (HEGHCYKVFS…CSSTQQFVCK (112 aa)).

This sequence belongs to the snaclec family. In terms of assembly, heterodimer; disulfide-linked. Expressed by the venom gland.

The protein localises to the secreted. Functionally, interferes with one step of hemostasis (modulation of platelet aggregation, or coagulation cascade, for example). This chain is Snaclec 27, found in Echis ocellatus (Ocellated saw-scaled viper).